The primary structure comprises 402 residues: Protein FAM221B (402 aa).

Residues 1 to 35 (MEAHEIIEEPHITMDAEKHPPSKDPSAEDLQENHI) are compositionally biased toward basic and acidic residues. Disordered regions lie at residues 1-205 (MEAH…TARP) and 378-402 (DTQK…HRPL). Composition is skewed to polar residues over residues 77–90 (EPSI…TPTY) and 393–402 (DTVSNWHRPL).

This sequence belongs to the FAM221 family.

The chain is Protein FAM221B (FAM221B) from Homo sapiens (Human).